The following is a 166-amino-acid chain: Regulatory protein RecX (166 aa).

The protein belongs to the RecX family.

The protein localises to the cytoplasm. Modulates RecA activity. This chain is Regulatory protein RecX, found in Escherichia coli (strain SMS-3-5 / SECEC).